The primary structure comprises 400 residues: MTQFASPVLHSLLDTDAYKLHMQQAVFHHYYDVHVAAEFRCRGDDLLGIYADAIREQVQAMQHLRLQDDEYQWLSALPFFKADYLNWLRKFRFNPEQVTVSNDNGKLDIRLSGPWREVILWEVPLLAVISEMVHRYRSPQADVAQALDTLESKLVDFSALTAGLDMSRFHLMDFGTRRRFSREVQETIVKRLQQESWFVGTSNYDLARRLSLTPMGTQAHEWFQAHQQISPDLANSQRAALAAWLEEYPDQLGIALTDCITMDAFLRDFGVEFASRYQGLRHDSGDPVEWGEKAIAHYEKLGIDPQSKTLVFSDNLDLRKAVELYRHFSSRVQLSFGIGTRLTCDIPQVKPLNIVIKLVECNGKPVAKLSDSPSKTICHDKAFVRALRKAFDLPHIKKAS.

His220 carries the post-translational modification Phosphohistidine; by autocatalysis.

The protein belongs to the NAPRTase family. In terms of processing, transiently phosphorylated on a His residue during the reaction cycle. Phosphorylation strongly increases the affinity for substrates and increases the rate of nicotinate D-ribonucleotide production. Dephosphorylation regenerates the low-affinity form of the enzyme, leading to product release.

It catalyses the reaction nicotinate + 5-phospho-alpha-D-ribose 1-diphosphate + ATP + H2O = nicotinate beta-D-ribonucleotide + ADP + phosphate + diphosphate. Its pathway is cofactor biosynthesis; NAD(+) biosynthesis; nicotinate D-ribonucleotide from nicotinate: step 1/1. Its function is as follows. Catalyzes the synthesis of beta-nicotinate D-ribonucleotide from nicotinate and 5-phospho-D-ribose 1-phosphate at the expense of ATP. In Shigella dysenteriae serotype 1 (strain Sd197), this protein is Nicotinate phosphoribosyltransferase.